Reading from the N-terminus, the 356-residue chain is Trifolitoxin operon protein TfxC (356 aa).

This Rhizobium leguminosarum bv. trifolii protein is Trifolitoxin operon protein TfxC (tfxC).